The chain runs to 300 residues: Cation-efflux pump FieF (300 aa).

4 helical membrane-spanning segments follow: residues 11-31 (LAAV…VFAW), 40-60 (LASL…LLVV), 81-101 (LAAL…ILTG), and 114-134 (PEVG…LVSF). Zn(2+) is bound by residues Asp45 and Asp49. Zn(2+)-binding residues include His153 and Asp157. 2 helical membrane passes run 156 to 176 (SDLL…KGIT) and 182 to 202 (FALG…YDAV).

Belongs to the cation diffusion facilitator (CDF) transporter (TC 2.A.4) family. FieF subfamily. As to quaternary structure, homodimer.

The protein localises to the cell inner membrane. The enzyme catalyses Zn(2+)(in) + H(+)(out) = Zn(2+)(out) + H(+)(in). It carries out the reaction Cd(2+)(in) + H(+)(out) = Cd(2+)(out) + H(+)(in). It catalyses the reaction Fe(2+)(in) + H(+)(out) = Fe(2+)(out) + H(+)(in). In terms of biological role, divalent metal cation transporter which exports Zn(2+), Cd(2+) and possibly Fe(2+). May be involved in zinc and iron detoxification by efflux. The protein is Cation-efflux pump FieF of Pectobacterium atrosepticum (strain SCRI 1043 / ATCC BAA-672) (Erwinia carotovora subsp. atroseptica).